We begin with the raw amino-acid sequence, 273 residues long: Dermonecrotic toxin LdSicTox-alphaIB1aii (273 aa).

H5 is a catalytic residue. Residues E25 and D27 each contribute to the Mg(2+) site. H41 (nucleophile) is an active-site residue. Disulfide bonds link C45–C51 and C47–C190. Residue D85 coordinates Mg(2+). N250 carries an N-linked (GlcNAc...) asparagine glycan.

It belongs to the arthropod phospholipase D family. Class II subfamily. Mg(2+) serves as cofactor. As to expression, expressed by the venom gland.

The protein resides in the secreted. It catalyses the reaction an N-(acyl)-sphingosylphosphocholine = an N-(acyl)-sphingosyl-1,3-cyclic phosphate + choline. The enzyme catalyses an N-(acyl)-sphingosylphosphoethanolamine = an N-(acyl)-sphingosyl-1,3-cyclic phosphate + ethanolamine. The catalysed reaction is a 1-acyl-sn-glycero-3-phosphocholine = a 1-acyl-sn-glycero-2,3-cyclic phosphate + choline. It carries out the reaction a 1-acyl-sn-glycero-3-phosphoethanolamine = a 1-acyl-sn-glycero-2,3-cyclic phosphate + ethanolamine. Dermonecrotic toxins cleave the phosphodiester linkage between the phosphate and headgroup of certain phospholipids (sphingolipid and lysolipid substrates), forming an alcohol (often choline) and a cyclic phosphate. This toxin acts on sphingomyelin (SM). It may also act on ceramide phosphoethanolamine (CPE), lysophosphatidylcholine (LPC) and lysophosphatidylethanolamine (LPE), but not on lysophosphatidylserine (LPS), and lysophosphatidylglycerol (LPG). It acts by transphosphatidylation, releasing exclusively cyclic phosphate products as second products. Induces dermonecrosis, hemolysis, increased vascular permeability, edema, inflammatory response, and platelet aggregation. The chain is Dermonecrotic toxin LdSicTox-alphaIB1aii from Loxosceles deserta (Desert recluse spider).